The primary structure comprises 192 residues: MPPTAFALNDFITRFQLQLPPSLRPVHQQRQAAVLVPIICHPTPTLLLTRRSADLRKHAGQVAFPGGAADKTDRSIIETALREAQEEVAIPPENVQVLGVLPPLDSVSGFQVTPVVGLIAAQTRFHPNEDEVAELFEMPLDEAFALTRYYPLDIERKQQRHRVYLSWYQQQFVWGLTAAIIHQLALQISDRP.

Residues 29–160 form the Nudix hydrolase domain; that stretch reads QRQAAVLVPI…PLDIERKQQR (132 aa). The short motif at 67–89 is the Nudix box element; sequence GAADKTDRSIIETALREAQEEVA. Residues E83 and E87 each coordinate Mg(2+).

Belongs to the Nudix hydrolase family. PCD1 subfamily. Mn(2+) serves as cofactor. Mg(2+) is required as a cofactor.

Functionally, probably mediates the hydrolysis of some nucleoside diphosphate derivatives. This is an uncharacterized protein from Pectobacterium atrosepticum (strain SCRI 1043 / ATCC BAA-672) (Erwinia carotovora subsp. atroseptica).